Here is a 296-residue protein sequence, read N- to C-terminus: dTDP-4-dehydrorhamnose reductase (296 aa).

NADH-binding positions include 10–12 (GQI), 35–36 (DL), and 59–61 (AYT). Residues 11 to 12 (QI), 35 to 36 (DL), and 59 to 61 (AYT) contribute to the NADPH site. 100–101 (TD) contacts dTDP-beta-L-rhamnose. NADH is bound by residues Tyr-124 and Lys-128. Tyr-124 and Lys-128 together coordinate NADPH. The active-site Proton donor/acceptor is the Tyr-124. Position 149 (Trp-149) interacts with dTDP-beta-L-rhamnose.

The protein belongs to the dTDP-4-dehydrorhamnose reductase family. Homodimer. The cofactor is Mg(2+).

The enzyme catalyses dTDP-beta-L-rhamnose + NADP(+) = dTDP-4-dehydro-beta-L-rhamnose + NADPH + H(+). Its pathway is carbohydrate biosynthesis; dTDP-L-rhamnose biosynthesis. Functionally, involved in the biosynthesis of the dTDP-L-rhamnose which is an important component of lipopolysaccharide (LPS). Catalyzes the reduction of dTDP-6-deoxy-L-lyxo-4-hexulose to yield dTDP-L-rhamnose. RmlD uses NADH and NADPH nearly equally well. In Sinorhizobium fredii (strain NBRC 101917 / NGR234), this protein is dTDP-4-dehydrorhamnose reductase.